We begin with the raw amino-acid sequence, 307 residues long: Pyridoxal 5'-phosphate synthase subunit PdxS (307 aa).

Residues 1–10 are compositionally biased toward basic residues; sequence MRGQPRPKLR. Residues 1–20 form a disordered region; sequence MRGQPRPKLRRMTEQQTGTP. Asp-37 lines the D-ribose 5-phosphate pocket. Lys-94 serves as the catalytic Schiff-base intermediate with D-ribose 5-phosphate. Residue Gly-166 coordinates D-ribose 5-phosphate. Arg-178 contributes to the D-glyceraldehyde 3-phosphate binding site. Residues Gly-227 and 248 to 249 contribute to the D-ribose 5-phosphate site; that span reads GS.

This sequence belongs to the PdxS/SNZ family. In terms of assembly, in the presence of PdxT, forms a dodecamer of heterodimers.

The enzyme catalyses aldehydo-D-ribose 5-phosphate + D-glyceraldehyde 3-phosphate + L-glutamine = pyridoxal 5'-phosphate + L-glutamate + phosphate + 3 H2O + H(+). It functions in the pathway cofactor biosynthesis; pyridoxal 5'-phosphate biosynthesis. Catalyzes the formation of pyridoxal 5'-phosphate from ribose 5-phosphate (RBP), glyceraldehyde 3-phosphate (G3P) and ammonia. The ammonia is provided by the PdxT subunit. Can also use ribulose 5-phosphate and dihydroxyacetone phosphate as substrates, resulting from enzyme-catalyzed isomerization of RBP and G3P, respectively. This is Pyridoxal 5'-phosphate synthase subunit PdxS from Deinococcus radiodurans (strain ATCC 13939 / DSM 20539 / JCM 16871 / CCUG 27074 / LMG 4051 / NBRC 15346 / NCIMB 9279 / VKM B-1422 / R1).